The following is a 573-amino-acid chain: 2-succinyl-5-enolpyruvyl-6-hydroxy-3-cyclohexene-1-carboxylate synthase (573 aa).

The protein belongs to the TPP enzyme family. MenD subfamily. Homodimer. It depends on Mg(2+) as a cofactor. The cofactor is Mn(2+). Thiamine diphosphate serves as cofactor.

It carries out the reaction isochorismate + 2-oxoglutarate + H(+) = 5-enolpyruvoyl-6-hydroxy-2-succinyl-cyclohex-3-ene-1-carboxylate + CO2. It functions in the pathway quinol/quinone metabolism; 1,4-dihydroxy-2-naphthoate biosynthesis; 1,4-dihydroxy-2-naphthoate from chorismate: step 2/7. The protein operates within quinol/quinone metabolism; menaquinone biosynthesis. Catalyzes the thiamine diphosphate-dependent decarboxylation of 2-oxoglutarate and the subsequent addition of the resulting succinic semialdehyde-thiamine pyrophosphate anion to isochorismate to yield 2-succinyl-5-enolpyruvyl-6-hydroxy-3-cyclohexene-1-carboxylate (SEPHCHC). The sequence is that of 2-succinyl-5-enolpyruvyl-6-hydroxy-3-cyclohexene-1-carboxylate synthase from Shewanella putrefaciens (strain CN-32 / ATCC BAA-453).